The chain runs to 463 residues: Trigger factor (463 aa).

The region spanning 162 to 243 (GDHVSIDLSA…VHSVKLKELP (82 aa)) is the PPIase FKBP-type domain. The segment covering 427–444 (SGNTIEPPTPVHTETITV) has biased composition (polar residues). Residues 427 to 463 (SGNTIEPPTPVHTETITVASGDEETEESAAEQGETEK) form a disordered region.

This sequence belongs to the FKBP-type PPIase family. Tig subfamily.

The protein resides in the cytoplasm. It carries out the reaction [protein]-peptidylproline (omega=180) = [protein]-peptidylproline (omega=0). Involved in protein export. Acts as a chaperone by maintaining the newly synthesized protein in an open conformation. Functions as a peptidyl-prolyl cis-trans isomerase. The chain is Trigger factor from Thermobifida fusca (strain YX).